A 354-amino-acid polypeptide reads, in one-letter code: Protein RecA (354 aa).

Position 67–74 (67–74 (GPESSGKT)) interacts with ATP.

The protein belongs to the RecA family.

It localises to the cytoplasm. Can catalyze the hydrolysis of ATP in the presence of single-stranded DNA, the ATP-dependent uptake of single-stranded DNA by duplex DNA, and the ATP-dependent hybridization of homologous single-stranded DNAs. It interacts with LexA causing its activation and leading to its autocatalytic cleavage. This Yersinia enterocolitica serotype O:8 / biotype 1B (strain NCTC 13174 / 8081) protein is Protein RecA.